The following is a 470-amino-acid chain: Sulfate adenylyltransferase subunit 1 (470 aa).

One can recognise a tr-type G domain in the interval 22-238 (KELLRFITCG…ETIKIDYAYT (217 aa)). A G1 region spans residues 31-38 (GSVDDGKS). Residue 31 to 38 (GSVDDGKS) participates in GTP binding. A G2 region spans residues 89 to 93 (GITID). Positions 110 to 113 (DTPG) are G3. GTP-binding positions include 110–114 (DTPGH) and 165–168 (NKMD). The tract at residues 165–168 (NKMD) is G4. The G5 stretch occupies residues 202 to 204 (SAL).

It belongs to the TRAFAC class translation factor GTPase superfamily. Classic translation factor GTPase family. CysN/NodQ subfamily. As to quaternary structure, heterodimer composed of CysD, the smaller subunit, and CysN.

The catalysed reaction is sulfate + ATP + H(+) = adenosine 5'-phosphosulfate + diphosphate. Its pathway is sulfur metabolism; hydrogen sulfide biosynthesis; sulfite from sulfate: step 1/3. Its function is as follows. With CysD forms the ATP sulfurylase (ATPS) that catalyzes the adenylation of sulfate producing adenosine 5'-phosphosulfate (APS) and diphosphate, the first enzymatic step in sulfur assimilation pathway. APS synthesis involves the formation of a high-energy phosphoric-sulfuric acid anhydride bond driven by GTP hydrolysis by CysN coupled to ATP hydrolysis by CysD. This Francisella tularensis subsp. tularensis (strain SCHU S4 / Schu 4) protein is Sulfate adenylyltransferase subunit 1.